The primary structure comprises 293 residues: MGQKVHPYSLRVKINKDWKSKWYFDKKLYSAILHEDFLIRREIMKFLKGIKFDISDIEIIRNNPQKVTVVIVTPRPGSVIGLKGSNLEKIGQLLTKKISKKISIKIKEVKRPELDAQIIANGIAKQVENRASYRKVLKSSLSTSMLKGAQGLKIKIAGRLGGAEIARSFEVKEGRVPLHTLRANIDYGFSEAQTTYGIIGVKVWLFKGEVLGRQTNSDAGQVINKKPFRERGDAVKNFDKTLNNREKANEKQTRLLDKKDGLSKDEVDLLNKKKFSASFSKERDDSNEQDIGG.

Residues 39 to 110 (IRREIMKFLK…KISIKIKEVK (72 aa)) enclose the KH type-2 domain.

Belongs to the universal ribosomal protein uS3 family. As to quaternary structure, part of the 30S ribosomal subunit. Forms a tight complex with proteins S10 and S14.

Its function is as follows. Binds the lower part of the 30S subunit head. Binds mRNA in the 70S ribosome, positioning it for translation. The chain is Small ribosomal subunit protein uS3 from Borreliella burgdorferi (strain ATCC 35210 / DSM 4680 / CIP 102532 / B31) (Borrelia burgdorferi).